The following is a 492-amino-acid chain: N-succinylglutamate 5-semialdehyde dehydrogenase (492 aa).

220–225 (GSANTG) contacts NAD(+). Residues glutamate 243 and cysteine 277 contribute to the active site.

It belongs to the aldehyde dehydrogenase family. AstD subfamily.

The enzyme catalyses N-succinyl-L-glutamate 5-semialdehyde + NAD(+) + H2O = N-succinyl-L-glutamate + NADH + 2 H(+). It functions in the pathway amino-acid degradation; L-arginine degradation via AST pathway; L-glutamate and succinate from L-arginine: step 4/5. Functionally, catalyzes the NAD-dependent reduction of succinylglutamate semialdehyde into succinylglutamate. The protein is N-succinylglutamate 5-semialdehyde dehydrogenase of Escherichia coli (strain K12 / MC4100 / BW2952).